The chain runs to 44 residues: U4-ctenitoxin-Co1a (44 aa).

4 disulfide bridges follow: cysteine 2–cysteine 19, cysteine 9–cysteine 25, cysteine 18–cysteine 39, and cysteine 27–cysteine 37.

In terms of tissue distribution, expressed by the venom gland.

Its subcellular location is the secreted. In terms of biological role, omega-agatoxins are antagonists of voltage-gated calcium channels (Cav). Toxic to mice by intracerebroventricular injection. The chain is U4-ctenitoxin-Co1a from Ctenus ornatus (Brazilian spider).